The chain runs to 957 residues: Melanoma-associated antigen E1 (957 aa).

The disordered stretch occupies residues 1-455; sequence MSLVSQNSRR…DSEGPKGAEG (455 aa). Composition is skewed to polar residues over residues 85-96 and 104-130; these read SEASSASGQPTI and VLPT…SVTL. The segment covering 138–162 has biased composition (low complexity); the sequence is TSRPPTSSEEPSTSVPPTASEVPST. 5 stretches are compositionally biased toward polar residues: residues 219 to 244, 268 to 320, 329 to 344, 364 to 380, and 414 to 428; these read GLST…TEGL, PSTS…STSV, STSV…STSV, LSTS…DTSV, and TLFS…NPSK. MAGE domains lie at 491 to 690 and 745 to 936; these read MEQN…YNEA and LESK…YREA. The tract at residues 743–957 is interaction with DTNA; sequence SRLESKARKL…HRQIFVHNFR (215 aa).

As to quaternary structure, interacts with DTNA. Interacts with TRIM28.

It is found in the cytoplasm. Its subcellular location is the perinuclear region. The protein localises to the nucleus. It localises to the cell membrane. Functionally, may enhance ubiquitin ligase activity of RING-type zinc finger-containing E3 ubiquitin-protein ligases. Proposed to act through recruitment and/or stabilization of the Ubl-conjugating enzyme (E2) at the E3:substrate complex. The polypeptide is Melanoma-associated antigen E1 (MAGEE1) (Homo sapiens (Human)).